Consider the following 1317-residue polypeptide: DNA-directed RNA polymerase subunit beta' (1317 aa).

Zn(2+) is bound by residues cysteine 60, cysteine 62, cysteine 75, and cysteine 78. Mg(2+) is bound by residues aspartate 535, aspartate 537, and aspartate 539. The Zn(2+) site is built by cysteine 890, cysteine 967, cysteine 974, and cysteine 977.

It belongs to the RNA polymerase beta' chain family. In terms of assembly, the RNAP catalytic core consists of 2 alpha, 1 beta, 1 beta' and 1 omega subunit. When a sigma factor is associated with the core the holoenzyme is formed, which can initiate transcription. Requires Mg(2+) as cofactor. The cofactor is Zn(2+).

It carries out the reaction RNA(n) + a ribonucleoside 5'-triphosphate = RNA(n+1) + diphosphate. DNA-dependent RNA polymerase catalyzes the transcription of DNA into RNA using the four ribonucleoside triphosphates as substrates. This chain is DNA-directed RNA polymerase subunit beta', found in Nocardia farcinica (strain IFM 10152).